The chain runs to 638 residues: MIDSTRYPRLSRIQTPDDLRTFEEADLTAVADELRAYLIESVGKSGGHFAAGLGVIELTVALHYLYQTPVDQLVWDVGHQTYPHKILTGRRDQIHTVKQKDGVAPFPKREESVYDTFGVGHSSTSISAALGMAIAAQRNGDDRKVVAVIGDGAMTAGMVYEALNHAGGMDPEPNLLVILNDNRMSISEAVGGLTKMLGRASGSRTLNAIREGGKKILGDKKNNPTARFVRRWEEHWKGMFVPSTLFEEMGFHYTGPIDGHDLPSLVGALKTLKTLKGPQLLHVITTKGKGYELAEGDQIGYHAVGPFDPSKGLVAKAGAKKPTYTDVFSDWVCDMAAADPKMLVITPAMREGSGLVRFSKEYPQRYFDVAIAEQHAVTLAAGMATQGAKPVVAIYSTFLQRGYDQLVHDVAVQKLDVLFAIDRGGVVGPDGATHAGNLDLSFLRCVPHMVVMAPADEAECRQMLTTGLRYEGPAAVRYPRGTGPGTALDAALTTLPIGKAQLRHSGARIALLGFGATVDAAEAVGRELGLTVVNMRFVKPLDKAMLLELAKCHEAFVSIEDNVVAGGAGSGVSELLNAEGVLMPMLHLGLPDSFQHHASREDLLAEAGIDQAGIRAAVLKRWPQLMAKGQQALNAAAG.

Thiamine diphosphate-binding positions include histidine 79 and 120 to 122 (GHS). Aspartate 151 lines the Mg(2+) pocket. Residues 152–153 (GA), asparagine 182, tyrosine 291, and glutamate 373 each bind thiamine diphosphate. Asparagine 182 is a Mg(2+) binding site.

It belongs to the transketolase family. DXPS subfamily. Homodimer. Requires Mg(2+) as cofactor. Thiamine diphosphate is required as a cofactor.

The catalysed reaction is D-glyceraldehyde 3-phosphate + pyruvate + H(+) = 1-deoxy-D-xylulose 5-phosphate + CO2. It functions in the pathway metabolic intermediate biosynthesis; 1-deoxy-D-xylulose 5-phosphate biosynthesis; 1-deoxy-D-xylulose 5-phosphate from D-glyceraldehyde 3-phosphate and pyruvate: step 1/1. Its function is as follows. Catalyzes the acyloin condensation reaction between C atoms 2 and 3 of pyruvate and glyceraldehyde 3-phosphate to yield 1-deoxy-D-xylulose-5-phosphate (DXP). In Xanthomonas campestris pv. campestris (strain 8004), this protein is 1-deoxy-D-xylulose-5-phosphate synthase.